Here is a 656-residue protein sequence, read N- to C-terminus: Translation factor GUF1 homolog, mitochondrial (656 aa).

Residues 55–236 (QRIRNFSIIA…EIVRRLPPPD (182 aa)) form the tr-type G domain. GTP contacts are provided by residues 64–71 (AHVDHGKS), 129–133 (DTPGH), and 183–186 (NKID).

This sequence belongs to the TRAFAC class translation factor GTPase superfamily. Classic translation factor GTPase family. LepA subfamily.

The protein resides in the mitochondrion inner membrane. It catalyses the reaction GTP + H2O = GDP + phosphate + H(+). Functionally, promotes mitochondrial protein synthesis. May act as a fidelity factor of the translation reaction, by catalyzing a one-codon backward translocation of tRNAs on improperly translocated ribosomes. Binds to mitochondrial ribosomes in a GTP-dependent manner. This chain is Translation factor GUF1 homolog, mitochondrial, found in Aedes aegypti (Yellowfever mosquito).